The primary structure comprises 134 residues: Profilin-3 (134 aa).

Cys13 and Cys118 are disulfide-bonded. An Involved in PIP2 interaction motif is present at residues 84 to 100 (AVIRGKKGSGGITIKKT). At Thr114 the chain carries Phosphothreonine.

Belongs to the profilin family. In terms of assembly, occurs in many kinds of cells as a complex with monomeric actin in a 1:1 ratio. In terms of processing, phosphorylated by MAP kinases.

The protein localises to the cytoplasm. It localises to the cytoskeleton. Its function is as follows. Binds to actin and affects the structure of the cytoskeleton. At high concentrations, profilin prevents the polymerization of actin, whereas it enhances it at low concentrations. In Olea europaea (Common olive), this protein is Profilin-3.